A 115-amino-acid chain; its full sequence is Large ribosomal subunit protein bL20 (115 aa).

Belongs to the bacterial ribosomal protein bL20 family.

Its function is as follows. Binds directly to 23S ribosomal RNA and is necessary for the in vitro assembly process of the 50S ribosomal subunit. It is not involved in the protein synthesizing functions of that subunit. This chain is Large ribosomal subunit protein bL20, found in Chlorobium phaeovibrioides (strain DSM 265 / 1930) (Prosthecochloris vibrioformis (strain DSM 265)).